A 469-amino-acid chain; its full sequence is Glutamate--tRNA ligase (469 aa).

The 'HIGH' region signature appears at 11–21; it reads PSPTGFIHLGN. Over residues 118–131 the composition is skewed to basic and acidic residues; that stretch reads GEKPRYDGTWRPEP. A disordered region spans residues 118–139; the sequence is GEKPRYDGTWRPEPGKVLPEPP. Residues 243-247 carry the 'KMSKS' region motif; the sequence is KMSKR. Lysine 246 provides a ligand contact to ATP.

Belongs to the class-I aminoacyl-tRNA synthetase family. Glutamate--tRNA ligase type 1 subfamily. In terms of assembly, monomer.

It is found in the cytoplasm. It carries out the reaction tRNA(Glu) + L-glutamate + ATP = L-glutamyl-tRNA(Glu) + AMP + diphosphate. Its function is as follows. Catalyzes the attachment of glutamate to tRNA(Glu) in a two-step reaction: glutamate is first activated by ATP to form Glu-AMP and then transferred to the acceptor end of tRNA(Glu). In Burkholderia mallei (strain NCTC 10247), this protein is Glutamate--tRNA ligase.